Here is a 701-residue protein sequence, read N- to C-terminus: DUF724 domain-containing protein 6 (701 aa).

Disordered stretches follow at residues Met299 to Asn353 and Val374 to Cys452. The span at Leu326–Ser340 shows a compositional bias: basic and acidic residues. Residues Arg381–Ser399 show a composition bias toward polar residues. Composition is skewed to basic and acidic residues over residues Lys403–Asn412, Lys421–Lys430, and Arg437–Asp449. The DUF724 domain maps to Leu514–Pro700. Residues Leu626–Lys670 are a coiled coil.

In terms of tissue distribution, expressed in roots, stems and flowers.

Its subcellular location is the nucleus. May be involved in the polar growth of plant cells via transportation of RNAs. This chain is DUF724 domain-containing protein 6, found in Arabidopsis thaliana (Mouse-ear cress).